The following is a 126-amino-acid chain: Large ribosomal subunit protein eL18 (126 aa).

The protein belongs to the eukaryotic ribosomal protein eL18 family.

This chain is Large ribosomal subunit protein eL18, found in Methanosarcina acetivorans (strain ATCC 35395 / DSM 2834 / JCM 12185 / C2A).